The primary structure comprises 255 residues: F-box only protein 44 (255 aa).

Residues 3 to 50 (VGNINELPENILLELFIHIPARQLLLRCRPVCSLWRDLIDLVTLWKRK) enclose the F-box domain. One can recognise an FBA domain in the interval 71–252 (FYFLRSLQRN…VTNSSITIGP (182 aa)).

As to quaternary structure, part of a SCF (SKP1-cullin-F-box) protein ligase complex. Interacts with SKP1 and CUL1. Expressed in brain, liver, pancreas and adipose tissue (at protein level). Widely expressed.

Functionally, substrate-recognition component of the SCF (SKP1-CUL1-F-box protein)-type E3 ubiquitin ligase complex. The sequence is that of F-box only protein 44 (Fbxo44) from Mus musculus (Mouse).